A 331-amino-acid chain; its full sequence is Quinone oxidoreductase (331 aa).

Residue Ala-2 is modified to N-acetylalanine. Position 23 is an N6-acetyllysine (Lys-23). Position 35 is a phosphoserine (Ser-35). NADP(+) is bound by residues Tyr-53, 158-161, and Gly-181; that span reads SGGV. Residue Lys-186 is modified to N6-acetyllysine. Residues His-200, Asn-231, 248 to 251, and 271 to 273 each bind NADP(+); these read VGCR and VSL. Lys-298 carries the post-translational modification N6-succinyllysine.

This sequence belongs to the zinc-containing alcohol dehydrogenase family. Quinone oxidoreductase subfamily. As to quaternary structure, homotetramer.

Its subcellular location is the cytoplasm. It carries out the reaction 2 a quinone + NADPH + H(+) = 2 a 1,4-benzosemiquinone + NADP(+). Does not have alcohol dehydrogenase activity. Binds NADP and acts through a one-electron transfer process. Orthoquinones, such as 1,2-naphthoquinone or 9,10-phenanthrenequinone, are the best substrates (in vitro). May act in the detoxification of xenobiotics. Interacts with (AU)-rich elements (ARE) in the 3'-UTR of target mRNA species and enhances their stability. NADPH binding interferes with mRNA binding. This is Quinone oxidoreductase (Cryz) from Mus musculus (Mouse).